We begin with the raw amino-acid sequence, 379 residues long: Queuine tRNA-ribosyltransferase (379 aa).

Asp-94 acts as the Proton acceptor in catalysis. Residues 94-98 (DSGGF), Asp-148, Gln-191, and Gly-218 each bind substrate. The segment at 249–255 (GVGSPDA) is RNA binding. Asp-268 functions as the Nucleophile in the catalytic mechanism. The tract at residues 273–277 (TRIAR) is RNA binding; important for wobble base 34 recognition. Residues Cys-306, Cys-308, Cys-311, and His-337 each contribute to the Zn(2+) site.

The protein belongs to the queuine tRNA-ribosyltransferase family. In terms of assembly, homodimer. Within each dimer, one monomer is responsible for RNA recognition and catalysis, while the other monomer binds to the replacement base PreQ1. It depends on Zn(2+) as a cofactor.

It catalyses the reaction 7-aminomethyl-7-carbaguanine + guanosine(34) in tRNA = 7-aminomethyl-7-carbaguanosine(34) in tRNA + guanine. It functions in the pathway tRNA modification; tRNA-queuosine biosynthesis. Catalyzes the base-exchange of a guanine (G) residue with the queuine precursor 7-aminomethyl-7-deazaguanine (PreQ1) at position 34 (anticodon wobble position) in tRNAs with GU(N) anticodons (tRNA-Asp, -Asn, -His and -Tyr). Catalysis occurs through a double-displacement mechanism. The nucleophile active site attacks the C1' of nucleotide 34 to detach the guanine base from the RNA, forming a covalent enzyme-RNA intermediate. The proton acceptor active site deprotonates the incoming PreQ1, allowing a nucleophilic attack on the C1' of the ribose to form the product. After dissociation, two additional enzymatic reactions on the tRNA convert PreQ1 to queuine (Q), resulting in the hypermodified nucleoside queuosine (7-(((4,5-cis-dihydroxy-2-cyclopenten-1-yl)amino)methyl)-7-deazaguanosine). The chain is Queuine tRNA-ribosyltransferase from Staphylococcus epidermidis (strain ATCC 35984 / DSM 28319 / BCRC 17069 / CCUG 31568 / BM 3577 / RP62A).